Here is a 465-residue protein sequence, read N- to C-terminus: Cysteine--tRNA ligase (465 aa).

Cys-29 serves as a coordination point for Zn(2+). The 'HIGH' region motif lies at 31–41; the sequence is PTVYNYIHIGN. Zn(2+) contacts are provided by Cys-209, His-234, and Glu-238. A 'KMSKS' region motif is present at residues 266–270; sequence KMSKS. Lys-269 provides a ligand contact to ATP. A Phosphoserine modification is found at Ser-270.

The protein belongs to the class-I aminoacyl-tRNA synthetase family. Monomer. Zn(2+) is required as a cofactor.

It localises to the cytoplasm. It catalyses the reaction tRNA(Cys) + L-cysteine + ATP = L-cysteinyl-tRNA(Cys) + AMP + diphosphate. This is Cysteine--tRNA ligase from Bacillus cereus (strain B4264).